The sequence spans 452 residues: LIM/homeobox protein lim-7 (452 aa).

LIM zinc-binding domains follow at residues 54–116 (AVCA…LFTT) and 117–179 (RCSR…LDNP). The disordered stretch occupies residues 184-268 (SVPDYSKLNN…KKKDKQATRV (85 aa)). Low complexity-rich tracts occupy residues 192-205 (NNNN…SSSN) and 217-227 (TLTSLDNNTSS). Positions 265–324 (ATRVRTVLNENQLKILRDCYSINSRPDATLKERLVEMTGLSARVIRVWFQNKRCKDKKRQ) form a DNA-binding region, homeobox. The segment at 347-376 (GIGPLMVQPATPHIDNTLGGPIDIQHFAQW) is LIM interaction domain (LID).

Interacts (via LID domain) with ceh-14 (via LIM zinc-binding domains 1 and 2). In terms of tissue distribution, expressed in gonadal sheath cells, URA motoneurons, and 10 additional cells near the isthmus and terminal bulb of the pharynx. Expressed in the ALA and BDU cells.

It localises to the nucleus. Functionally, probable DNA-binding transcriptional activator. The sequence is that of LIM/homeobox protein lim-7 from Caenorhabditis elegans.